Reading from the N-terminus, the 355-residue chain is Probable dual-specificity RNA methyltransferase RlmN (355 aa).

Residues 1–20 form a disordered region; the sequence is MSATPVTQLTPSSQPQQPCS. The active-site Proton acceptor is glutamate 107. Positions 113–341 constitute a Radical SAM core domain; it reads TDKRLTVCVS…VSVRYSRGLE (229 aa). Cysteine 120 and cysteine 346 are oxidised to a cystine. 3 residues coordinate [4Fe-4S] cluster: cysteine 127, cysteine 131, and cysteine 134. Residues 174–175, serine 204, 227–229, and asparagine 303 each bind S-adenosyl-L-methionine; these read GE and SLH. The S-methylcysteine intermediate role is filled by cysteine 346.

This sequence belongs to the radical SAM superfamily. RlmN family. The cofactor is [4Fe-4S] cluster.

The protein localises to the cytoplasm. The catalysed reaction is adenosine(2503) in 23S rRNA + 2 reduced [2Fe-2S]-[ferredoxin] + 2 S-adenosyl-L-methionine = 2-methyladenosine(2503) in 23S rRNA + 5'-deoxyadenosine + L-methionine + 2 oxidized [2Fe-2S]-[ferredoxin] + S-adenosyl-L-homocysteine. The enzyme catalyses adenosine(37) in tRNA + 2 reduced [2Fe-2S]-[ferredoxin] + 2 S-adenosyl-L-methionine = 2-methyladenosine(37) in tRNA + 5'-deoxyadenosine + L-methionine + 2 oxidized [2Fe-2S]-[ferredoxin] + S-adenosyl-L-homocysteine. In terms of biological role, specifically methylates position 2 of adenine 2503 in 23S rRNA and position 2 of adenine 37 in tRNAs. This is Probable dual-specificity RNA methyltransferase RlmN from Nostoc sp. (strain PCC 7120 / SAG 25.82 / UTEX 2576).